A 478-amino-acid polypeptide reads, in one-letter code: Lysine-rich nucleolar protein 1 (478 aa).

Positions 1-231 are disordered; it reads MVSKTQKADL…THQEGDILLV (231 aa). Residue Lys7 forms a Glycyl lysine isopeptide (Lys-Gly) (interchain with G-Cter in SUMO2) linkage. Over residues 17-27 the composition is skewed to basic residues; the sequence is KKKKKKKKKRV. Over residues 33-45 the composition is skewed to polar residues; sequence EPETQYSVLNSND. Residues Ser51 and Ser59 each carry the phosphoserine modification. Polar residues predominate over residues 54 to 63; sequence RATSPSNNVD. 2 stretches are compositionally biased toward basic residues: residues 73-82 and 120-129; these read SKRKKKKKSC and EKKKKRRKSL. A Glycyl lysine isopeptide (Lys-Gly) (interchain with G-Cter in SUMO2) cross-link involves residue Lys140. Ser142 is modified (phosphoserine). Over residues 143–153 the composition is skewed to basic and acidic residues; that stretch reads PDPKHAKEVSK. Composition is skewed to basic residues over residues 154-165 and 204-222; these read AGRKSKKQRKEK and QKRK…KKKT. A Glycyl lysine isopeptide (Lys-Gly) (interchain with G-Cter in SUMO1); alternate cross-link involves residue Lys250. A Glycyl lysine isopeptide (Lys-Gly) (interchain with G-Cter in SUMO2); alternate cross-link involves residue Lys250. The segment at 258-314 is disordered; sequence PIDSPKAPGKKKVKSKKKVEQPVGEGLAVKRKKKKKKRKENGVKEDPWQEEKEESDT. The residue at position 261 (Ser261) is a Phosphoserine. Over residues 265 to 274 the composition is skewed to basic residues; it reads PGKKKVKSKK. Glycyl lysine isopeptide (Lys-Gly) (interchain with G-Cter in SUMO2) cross-links involve residues Lys275 and Lys287. Basic residues predominate over residues 286-296; the sequence is VKRKKKKKKRK. Positions 297 to 307 are enriched in basic and acidic residues; the sequence is ENGVKEDPWQE. Lys309 is covalently cross-linked (Glycyl lysine isopeptide (Lys-Gly) (interchain with G-Cter in SUMO2)). The tract at residues 310–478 is interaction with ZNF106; it reads EESDTDLEVV…NASKSIKLQD (169 aa). A Phosphoserine modification is found at Ser312. Thr314 carries the post-translational modification Phosphothreonine. Lys323 is covalently cross-linked (Glycyl lysine isopeptide (Lys-Gly) (interchain with G-Cter in SUMO2)). A compositionally biased stretch (basic and acidic residues) spans 340-357; the sequence is QEEIDRESGKTEASEPKK. Positions 340–378 are disordered; it reads QEEIDRESGKTEASEPKKWTVGLSVKTEASEPKKWTGTQ. Residues Lys373, Lys393, Lys395, Lys427, and Lys462 each participate in a glycyl lysine isopeptide (Lys-Gly) (interchain with G-Cter in SUMO2) cross-link.

As to quaternary structure, interacts with ZNF106. In terms of tissue distribution, expressed in testis.

The protein localises to the nucleus. The protein resides in the nucleolus. In Mus musculus (Mouse), this protein is Lysine-rich nucleolar protein 1 (Knop1).